The following is a 180-amino-acid chain: ATP-dependent protease subunit HslV (180 aa).

Thr-7 is a catalytic residue. Residues Ala-165, Cys-168, and Thr-171 each contribute to the Na(+) site.

Belongs to the peptidase T1B family. HslV subfamily. A double ring-shaped homohexamer of HslV is capped on each side by a ring-shaped HslU homohexamer. The assembly of the HslU/HslV complex is dependent on binding of ATP.

It localises to the cytoplasm. The catalysed reaction is ATP-dependent cleavage of peptide bonds with broad specificity.. With respect to regulation, allosterically activated by HslU binding. In terms of biological role, protease subunit of a proteasome-like degradation complex believed to be a general protein degrading machinery. The polypeptide is ATP-dependent protease subunit HslV (Geobacillus kaustophilus (strain HTA426)).